Reading from the N-terminus, the 389-residue chain is Glutamate 5-kinase (389 aa).

Lys17 is an ATP binding site. Substrate is bound by residues Ser57, Asp144, and Asn156. 176–177 (SD) lines the ATP pocket. The PUA domain maps to 282-359 (AGEIHVDAGA…NEIETILGYV (78 aa)).

It belongs to the glutamate 5-kinase family.

Its subcellular location is the cytoplasm. The enzyme catalyses L-glutamate + ATP = L-glutamyl 5-phosphate + ADP. It functions in the pathway amino-acid biosynthesis; L-proline biosynthesis; L-glutamate 5-semialdehyde from L-glutamate: step 1/2. In terms of biological role, catalyzes the transfer of a phosphate group to glutamate to form L-glutamate 5-phosphate. This is Glutamate 5-kinase from Agrobacterium fabrum (strain C58 / ATCC 33970) (Agrobacterium tumefaciens (strain C58)).